Reading from the N-terminus, the 446-residue chain is Maltoporin (446 aa).

An N-terminal signal peptide occupies residues Met1–Ala25.

It belongs to the porin LamB (TC 1.B.3) family. Homotrimer formed of three 18-stranded antiparallel beta-barrels, containing three independent channels.

It localises to the cell outer membrane. It carries out the reaction beta-maltose(in) = beta-maltose(out). Its function is as follows. Involved in the transport of maltose and maltodextrins. In Escherichia coli (strain SE11), this protein is Maltoporin.